The sequence spans 446 residues: MNQHYSETRKIDPSRGATLGDNTPNDNNRIEIGPTQLAFGEWATAGLALPDLQRMREFRWNRLTQAVVDRDYGGVLMFDPLNIRYATDSTNMQLWNAHNPFRALLVCADGYMVIWDYKNSPFLSTFNPLVREQRFGADLFYFDRGDKVDVAADAFSNEVRTLIAEHGGGNMRLAVDKIMLHGLRALEAQGFEIMEGEELTEKTRAIKGPDEILAMRCAVHACETSVAAMEHFAREAVPQGNTSEDDVWAVLHAENIKRGGEWIETRLLASGPRTNPWFQECGPRIIQNNEIISFDTDLIGSYGICVDISRSWWVGDAAPPADMVYAMQHAHEHIMTNMEMLKPGVTIPELSERSHRLDEQFQAQKYGCLMHGVGLCDEWPLVAYPDQAVPGSYDYPLEPGMVLCVEAAVGAVGGNFTIKLEDQVLITETGYENLTSYPFDPALMGR.

The span at 1 to 13 shows a compositional bias: basic and acidic residues; it reads MNQHYSETRKIDP. A disordered region spans residues 1–30; that stretch reads MNQHYSETRKIDPSRGATLGDNTPNDNNRI. Asp-295, Asp-297, Asp-307, His-371, Glu-406, and Glu-421 together coordinate a divalent metal cation.

Belongs to the peptidase M24B family. As to quaternary structure, homodimer. The cofactor is a divalent metal cation.

The enzyme catalyses S,S-dimethyl-beta-propiothetin = acrylate + dimethyl sulfide + H(+). Able to cleave dimethylsulfoniopropionate (DMSP), releasing dimethyl sulfide (DMS). DMS is the principal form by which sulfur is transported from oceans to the atmosphere. The real activity of the protein is however subject to debate and it is unclear whether it constitutes a real dimethylsulfoniopropionate lyase in vivo: the low activity with DMSP as substrate suggests that DMSP is not its native substrate. The polypeptide is Dimethylsulfoniopropionate lyase DddP (Roseovarius nubinhibens (strain ATCC BAA-591 / DSM 15170 / ISM)).